The sequence spans 273 residues: Dermonecrotic toxin LarSicTox-alphaVII1 (273 aa).

Histidine 5 is a catalytic residue. Mg(2+)-binding residues include glutamate 25 and aspartate 27. Histidine 41 acts as the Nucleophile in catalysis. 2 cysteine pairs are disulfide-bonded: cysteine 45–cysteine 51 and cysteine 47–cysteine 192. Aspartate 85 lines the Mg(2+) pocket.

Belongs to the arthropod phospholipase D family. Class II subfamily. Mg(2+) is required as a cofactor. As to expression, expressed by the venom gland.

It localises to the secreted. The enzyme catalyses an N-(acyl)-sphingosylphosphocholine = an N-(acyl)-sphingosyl-1,3-cyclic phosphate + choline. It carries out the reaction an N-(acyl)-sphingosylphosphoethanolamine = an N-(acyl)-sphingosyl-1,3-cyclic phosphate + ethanolamine. The catalysed reaction is a 1-acyl-sn-glycero-3-phosphocholine = a 1-acyl-sn-glycero-2,3-cyclic phosphate + choline. It catalyses the reaction a 1-acyl-sn-glycero-3-phosphoethanolamine = a 1-acyl-sn-glycero-2,3-cyclic phosphate + ethanolamine. Dermonecrotic toxins cleave the phosphodiester linkage between the phosphate and headgroup of certain phospholipids (sphingolipid and lysolipid substrates), forming an alcohol (often choline) and a cyclic phosphate. This toxin acts on sphingomyelin (SM). It may also act on ceramide phosphoethanolamine (CPE), lysophosphatidylcholine (LPC) and lysophosphatidylethanolamine (LPE), but not on lysophosphatidylserine (LPS), and lysophosphatidylglycerol (LPG). It acts by transphosphatidylation, releasing exclusively cyclic phosphate products as second products. Induces dermonecrosis, hemolysis, increased vascular permeability, edema, inflammatory response, and platelet aggregation. The chain is Dermonecrotic toxin LarSicTox-alphaVII1 from Loxosceles arizonica (Arizona brown spider).